Consider the following 63-residue polypeptide: Hyphancin-3D (63 aa).

The first 22 residues, 1-22, serve as a signal peptide directing secretion; that stretch reads MNFSRIIFLVFACFVALASVSA. Positions 23 to 26 are cleaved as a propeptide — removed by a dipeptidylpeptidase; it reads APEP. Leucine amide is present on Leu-61.

This sequence belongs to the cecropin family.

Its subcellular location is the secreted. Functionally, has antibacterial activity. The protein is Hyphancin-3D of Hyphantria cunea (Fall webworm moth).